A 376-amino-acid chain; its full sequence is UPF0754 membrane protein SSP0953 (376 aa).

The next 2 membrane-spanning stretches (helical) occupy residues 4–24 (FLVI…TNVI) and 356–376 (FLGF…AIFV).

Belongs to the UPF0754 family.

Its subcellular location is the cell membrane. The chain is UPF0754 membrane protein SSP0953 from Staphylococcus saprophyticus subsp. saprophyticus (strain ATCC 15305 / DSM 20229 / NCIMB 8711 / NCTC 7292 / S-41).